The primary structure comprises 107 residues: U1-lycotoxin-Ls1d (107 aa).

A signal peptide spans 1-20 (MMKVLVVVALLVTLISYSSS). Residues 21-41 (EGIDDLEADELLSLMANEQTR) constitute a propeptide that is removed on maturation. Disulfide bonds link cysteine 44–cysteine 59, cysteine 51–cysteine 68, cysteine 58–cysteine 86, and cysteine 70–cysteine 84.

Belongs to the neurotoxin 19 (CSTX) family. 04 (U1-Lctx) subfamily. In terms of tissue distribution, expressed by the venom gland.

It localises to the secreted. This chain is U1-lycotoxin-Ls1d, found in Lycosa singoriensis (Wolf spider).